A 447-amino-acid polypeptide reads, in one-letter code: Probable 7-dehydrocholesterol reductase (447 aa).

A run of 8 helical transmembrane segments spans residues 24–44, 71–91, 102–124, 133–153, 157–177, 244–264, 281–301, and 309–329; these read LTTA…YLIT, IPSF…FQLI, FVPH…LVYY, IITH…PTII, WGSI…LAYF, YVSN…VDFF, FGWM…TLQA, and IDLS…GYII. NADP(+) is bound by residues lysine 337, arginine 341, isoleucine 367, tryptophan 372, and 379–380; that span reads NY. A helical transmembrane segment spans residues 393-413; sequence ACGFSHFIPYFYCVYMTILLV. NADP(+)-binding positions include aspartate 419, 423-427, and tyrosine 434; that span reads CSRKY.

This sequence belongs to the ERG4/ERG24 family.

Its subcellular location is the membrane. The enzyme catalyses cholesterol + NADP(+) = 7-dehydrocholesterol + NADPH + H(+). Its pathway is steroid biosynthesis; cholesterol biosynthesis. Its function is as follows. Catalyzes the last step of the cholesterol synthesis pathway, which transforms cholesta-5,7-dien-3beta-ol (7-dehydrocholesterol,7-DHC) into cholesterol by reducing the C7-C8 double bond of its sterol core. In Acanthamoeba polyphaga (Amoeba), this protein is Probable 7-dehydrocholesterol reductase (DHCR7).